The following is a 427-amino-acid chain: UDP-N-acetylglucosamine 1-carboxyvinyltransferase 1 (427 aa).

23-24 (KN) contacts phosphoenolpyruvate. A UDP-N-acetyl-alpha-D-glucosamine-binding site is contributed by Arg96. Residue Cys120 is the Proton donor of the active site. Cys120 carries the 2-(S-cysteinyl)pyruvic acid O-phosphothioketal modification. Residues 125-129 (RPIDL), Asp309, and Val331 each bind UDP-N-acetyl-alpha-D-glucosamine.

The protein belongs to the EPSP synthase family. MurA subfamily.

Its subcellular location is the cytoplasm. The catalysed reaction is phosphoenolpyruvate + UDP-N-acetyl-alpha-D-glucosamine = UDP-N-acetyl-3-O-(1-carboxyvinyl)-alpha-D-glucosamine + phosphate. The protein operates within cell wall biogenesis; peptidoglycan biosynthesis. In terms of biological role, cell wall formation. Adds enolpyruvyl to UDP-N-acetylglucosamine. The polypeptide is UDP-N-acetylglucosamine 1-carboxyvinyltransferase 1 (Streptococcus pneumoniae (strain ATCC BAA-255 / R6)).